The chain runs to 283 residues: Urease accessory protein UreD (283 aa).

The tract at residues 1-21 (MTQTQPVGTLRLTIDDQGPQG) is disordered.

It belongs to the UreD family. In terms of assembly, ureD, UreF and UreG form a complex that acts as a GTP-hydrolysis-dependent molecular chaperone, activating the urease apoprotein by helping to assemble the nickel containing metallocenter of UreC. The UreE protein probably delivers the nickel.

It is found in the cytoplasm. Probably acts in the maturation of urease via the functional incorporation of the urease nickel metallocenter. Required for urease expression. This Corynebacterium glutamicum (strain ATCC 13032 / DSM 20300 / JCM 1318 / BCRC 11384 / CCUG 27702 / LMG 3730 / NBRC 12168 / NCIMB 10025 / NRRL B-2784 / 534) protein is Urease accessory protein UreD.